A 427-amino-acid polypeptide reads, in one-letter code: Serine/threonine-protein kinase ssn3 (427 aa).

The region spanning 40–369 (YHIVGFISSG…AQEALEHPYF (330 aa)) is the Protein kinase domain. Residues 46-54 (ISSGTYGRV) and Lys-70 each bind ATP. Asp-172 acts as the Proton acceptor in catalysis. The span at 390-399 (RRVTQDDNDI) shows a compositional bias: basic and acidic residues. A disordered region spans residues 390 to 427 (RRVTQDDNDIRSGSLPGTKRSGLPDDSLLGRATKRLKE).

It belongs to the protein kinase superfamily. CMGC Ser/Thr protein kinase family. CDC2/CDKX subfamily. Component of the srb8-11 complex, a regulatory module of the Mediator complex. Requires Mg(2+) as cofactor.

The protein resides in the nucleus. It carries out the reaction L-seryl-[protein] + ATP = O-phospho-L-seryl-[protein] + ADP + H(+). It catalyses the reaction L-threonyl-[protein] + ATP = O-phospho-L-threonyl-[protein] + ADP + H(+). The enzyme catalyses [DNA-directed RNA polymerase] + ATP = phospho-[DNA-directed RNA polymerase] + ADP + H(+). Its function is as follows. Component of the srb8-11 complex. The srb8-11 complex is a regulatory module of the Mediator complex which is itself involved in regulation of basal and activated RNA polymerase II-dependent transcription. The srb8-11 complex may be involved in the transcriptional repression of a subset of genes regulated by Mediator. It may inhibit the association of the Mediator complex with RNA polymerase II to form the holoenzyme complex. The srb8-11 complex phosphorylates the C-terminal domain (CTD) of the largest subunit of RNA polymerase II. The protein is Serine/threonine-protein kinase ssn3 (ssn3) of Aspergillus niger (strain ATCC MYA-4892 / CBS 513.88 / FGSC A1513).